The sequence spans 286 residues: 4-hydroxy-3-methylbut-2-enyl diphosphate reductase (286 aa).

Cys-12 provides a ligand contact to [4Fe-4S] cluster. (2E)-4-hydroxy-3-methylbut-2-enyl diphosphate-binding residues include His-46 and His-79. His-46 and His-79 together coordinate dimethylallyl diphosphate. Isopentenyl diphosphate is bound by residues His-46 and His-79. Position 101 (Cys-101) interacts with [4Fe-4S] cluster. His-129 is a binding site for (2E)-4-hydroxy-3-methylbut-2-enyl diphosphate. A dimethylallyl diphosphate-binding site is contributed by His-129. His-129 contributes to the isopentenyl diphosphate binding site. Glu-131 (proton donor) is an active-site residue. Residue Thr-169 participates in (2E)-4-hydroxy-3-methylbut-2-enyl diphosphate binding. Cys-198 contacts [4Fe-4S] cluster. 3 residues coordinate (2E)-4-hydroxy-3-methylbut-2-enyl diphosphate: Ser-226, Asn-228, and Ser-270. Positions 226, 228, and 270 each coordinate dimethylallyl diphosphate. Positions 226, 228, and 270 each coordinate isopentenyl diphosphate.

It belongs to the IspH family. It depends on [4Fe-4S] cluster as a cofactor.

It catalyses the reaction isopentenyl diphosphate + 2 oxidized [2Fe-2S]-[ferredoxin] + H2O = (2E)-4-hydroxy-3-methylbut-2-enyl diphosphate + 2 reduced [2Fe-2S]-[ferredoxin] + 2 H(+). The catalysed reaction is dimethylallyl diphosphate + 2 oxidized [2Fe-2S]-[ferredoxin] + H2O = (2E)-4-hydroxy-3-methylbut-2-enyl diphosphate + 2 reduced [2Fe-2S]-[ferredoxin] + 2 H(+). The protein operates within isoprenoid biosynthesis; dimethylallyl diphosphate biosynthesis; dimethylallyl diphosphate from (2E)-4-hydroxy-3-methylbutenyl diphosphate: step 1/1. Its pathway is isoprenoid biosynthesis; isopentenyl diphosphate biosynthesis via DXP pathway; isopentenyl diphosphate from 1-deoxy-D-xylulose 5-phosphate: step 6/6. Its function is as follows. Catalyzes the conversion of 1-hydroxy-2-methyl-2-(E)-butenyl 4-diphosphate (HMBPP) into a mixture of isopentenyl diphosphate (IPP) and dimethylallyl diphosphate (DMAPP). Acts in the terminal step of the DOXP/MEP pathway for isoprenoid precursor biosynthesis. In Solidesulfovibrio magneticus (strain ATCC 700980 / DSM 13731 / RS-1) (Desulfovibrio magneticus), this protein is 4-hydroxy-3-methylbut-2-enyl diphosphate reductase.